A 435-amino-acid chain; its full sequence is MLDSKLLRTELDETAAKLARRGFKLDVETIGKLEEQRKSIQVEVENLQSTRNSISKQIGQLMSAGDKEGAEKIKQQIGSLGSDLDAKKIELDAVMAQLDDIILSVPNIPADEVPNGKDENDNLEISRWGEPKSYDFELKDHVDLGEMGDGLDFASAVKITGARFIVMKGQFARLHRAIAQFMLDLHTEEHGYTEMYVPYLVNADSLFGTGQLPKFGKDLFHTEPLTEKASDEEPRKLSLIPTAEVPVTNLVRDTISDEADLPLKMTAHTPCFRSEAGSYGRDTRGLIRMHQFDKVELVQITKPEDSMNALEELTGHAEKVLQLLELPYRKVLLCTGDMGFGSHKTYDLEVWVPAQNTYREISSCSNMWDFQARRMQARFRRKGEKKPELVHTLNGSGLAVGRTMVAILENNQEADGRIAIPTVLQKYMGGATHIG.

242–244 is a binding site for L-serine; that stretch reads TAE. 273–275 is an ATP binding site; that stretch reads RSE. L-serine is bound at residue glutamate 296. 360-363 is an ATP binding site; sequence EISS. Serine 396 contributes to the L-serine binding site.

Belongs to the class-II aminoacyl-tRNA synthetase family. Type-1 seryl-tRNA synthetase subfamily. Homodimer. The tRNA molecule binds across the dimer.

The protein resides in the cytoplasm. It catalyses the reaction tRNA(Ser) + L-serine + ATP = L-seryl-tRNA(Ser) + AMP + diphosphate + H(+). It carries out the reaction tRNA(Sec) + L-serine + ATP = L-seryl-tRNA(Sec) + AMP + diphosphate + H(+). It participates in aminoacyl-tRNA biosynthesis; selenocysteinyl-tRNA(Sec) biosynthesis; L-seryl-tRNA(Sec) from L-serine and tRNA(Sec): step 1/1. Catalyzes the attachment of serine to tRNA(Ser). Is also able to aminoacylate tRNA(Sec) with serine, to form the misacylated tRNA L-seryl-tRNA(Sec), which will be further converted into selenocysteinyl-tRNA(Sec). The chain is Serine--tRNA ligase from Vibrio vulnificus (strain CMCP6).